Reading from the N-terminus, the 192-residue chain is Acetyltransferase PA3944 (192 aa).

The N-acetyltransferase domain occupies 18–187 (LLLRAWRDSD…RHILYRVDAA (170 aa)). CoA-binding positions include 105-107 (WRL), Gly113, Asn145, and 150-152 (GLM).

In terms of biological role, catalyzes the transfer of an acetyl group from acetyl coenzyme A (AcCoA) to an acceptor substrate and releases both CoA and the acetylated product. It prefers the peptide Asp-Phe methyl ester (or aspartame) and the peptide antibiotics polymyxin B and colistin. Other substrates like dopamine, serotonin, puromycin, chloramphenicol, D-glucosamine, glycine and N-alpha-acetyl-L-glutamine are used and displayed lower activity. The protein is Acetyltransferase PA3944 of Pseudomonas aeruginosa (strain ATCC 15692 / DSM 22644 / CIP 104116 / JCM 14847 / LMG 12228 / 1C / PRS 101 / PAO1).